Consider the following 392-residue polypeptide: Succinate--CoA ligase [ADP-forming] subunit beta (392 aa).

The ATP-grasp domain maps to 9 to 248; it reads KGILKQFGVA…ITEEDPLEYE (240 aa). Residues lysine 50, 57–59, glutamate 103, methionine 106, and glutamate 111 each bind ATP; that span reads GRG. Mg(2+)-binding residues include asparagine 203 and aspartate 217. Residues asparagine 268 and 325-327 contribute to the substrate site; that span reads GIV.

The protein belongs to the succinate/malate CoA ligase beta subunit family. Heterotetramer of two alpha and two beta subunits. Mg(2+) serves as cofactor.

It carries out the reaction succinate + ATP + CoA = succinyl-CoA + ADP + phosphate. The catalysed reaction is GTP + succinate + CoA = succinyl-CoA + GDP + phosphate. It functions in the pathway carbohydrate metabolism; tricarboxylic acid cycle; succinate from succinyl-CoA (ligase route): step 1/1. Functionally, succinyl-CoA synthetase functions in the citric acid cycle (TCA), coupling the hydrolysis of succinyl-CoA to the synthesis of either ATP or GTP and thus represents the only step of substrate-level phosphorylation in the TCA. The beta subunit provides nucleotide specificity of the enzyme and binds the substrate succinate, while the binding sites for coenzyme A and phosphate are found in the alpha subunit. The sequence is that of Succinate--CoA ligase [ADP-forming] subunit beta from Chlorobaculum parvum (strain DSM 263 / NCIMB 8327) (Chlorobium vibrioforme subsp. thiosulfatophilum).